Here is a 341-residue protein sequence, read N- to C-terminus: Protein pelota homolog (341 aa).

Belongs to the eukaryotic release factor 1 family. Pelota subfamily. As to quaternary structure, monomer. A divalent metal cation is required as a cofactor.

It localises to the cytoplasm. In terms of biological role, may function in recognizing stalled ribosomes, interact with stem-loop structures in stalled mRNA molecules, and effect endonucleolytic cleavage of the mRNA. May play a role in the release non-functional ribosomes and degradation of damaged mRNAs. Has endoribonuclease activity. This Methanospirillum hungatei JF-1 (strain ATCC 27890 / DSM 864 / NBRC 100397 / JF-1) protein is Protein pelota homolog.